Here is a 295-residue protein sequence, read N- to C-terminus: 4-hydroxy-tetrahydrodipicolinate synthase (295 aa).

Residue Thr47 participates in pyruvate binding. Catalysis depends on Tyr135, which acts as the Proton donor/acceptor. Catalysis depends on Lys163, which acts as the Schiff-base intermediate with substrate. Pyruvate is bound at residue Ile206.

In terms of assembly, homodimer. In fact, exists in a monomer-dimer equilibrium in solution, shifted in favor of the dimer in presence of the substrate pyruvate; the monomer has significantly reduced activity compared with the dimer.

It is found in the cytoplasm. It carries out the reaction L-aspartate 4-semialdehyde + pyruvate = (2S,4S)-4-hydroxy-2,3,4,5-tetrahydrodipicolinate + H2O + H(+). It functions in the pathway amino-acid biosynthesis; L-lysine biosynthesis via DAP pathway; (S)-tetrahydrodipicolinate from L-aspartate: step 3/4. With respect to regulation, is insensitive to lysine-feedback inhibition. Shows ASA substrate inhibition. Its function is as follows. Catalyzes the condensation of (S)-aspartate-beta-semialdehyde [(S)-ASA] and pyruvate to 4-hydroxy-tetrahydrodipicolinate (HTPA). This Staphylococcus aureus (strain MRSA252) protein is 4-hydroxy-tetrahydrodipicolinate synthase.